A 265-amino-acid chain; its full sequence is Phosphonates import ATP-binding protein PhnC 1 (265 aa).

One can recognise an ABC transporter domain in the interval 3 to 247; sequence LRLSAIELRH…HLDTLYANEQ (245 aa). 36–43 provides a ligand contact to ATP; the sequence is GPSGAGKT.

Belongs to the ABC transporter superfamily. Phosphonates importer (TC 3.A.1.9.1) family. In terms of assembly, the complex is composed of two ATP-binding proteins (PhnC), two transmembrane proteins (PhnE) and a solute-binding protein (PhnD).

Its subcellular location is the cell inner membrane. It carries out the reaction phosphonate(out) + ATP + H2O = phosphonate(in) + ADP + phosphate + H(+). In terms of biological role, part of the ABC transporter complex PhnCDE involved in phosphonates import. Responsible for energy coupling to the transport system. The sequence is that of Phosphonates import ATP-binding protein PhnC 1 from Pseudomonas syringae pv. syringae (strain B728a).